The following is a 330-amino-acid chain: NADH-quinone oxidoreductase subunit H (330 aa).

Transmembrane regions (helical) follow at residues 11–31, 81–101, 114–134, 154–174, 187–207, 238–258, 270–290, and 309–329; these read ILVA…CGAL, FIFV…FAII, IGIL…LFAG, ISYE…VGSF, LWFI…GVAV, FFVG…TLFF, QIPF…FILL, and FCLP…LAAA.

The protein belongs to the complex I subunit 1 family. As to quaternary structure, NDH-1 is composed of 13 different subunits. Subunits NuoA, H, J, K, L, M, N constitute the membrane sector of the complex.

It localises to the cell inner membrane. It catalyses the reaction a quinone + NADH + 5 H(+)(in) = a quinol + NAD(+) + 4 H(+)(out). NDH-1 shuttles electrons from NADH, via FMN and iron-sulfur (Fe-S) centers, to quinones in the respiratory chain. The immediate electron acceptor for the enzyme in this species is believed to be ubiquinone. Couples the redox reaction to proton translocation (for every two electrons transferred, four hydrogen ions are translocated across the cytoplasmic membrane), and thus conserves the redox energy in a proton gradient. This subunit may bind ubiquinone. In Ectopseudomonas mendocina (strain ymp) (Pseudomonas mendocina), this protein is NADH-quinone oxidoreductase subunit H.